We begin with the raw amino-acid sequence, 100 residues long: Glyceraldehyde-3-phosphate dehydrogenase, testis-specific (100 aa).

The NAD(+) site is built by D39 and T64. R89 provides a ligand contact to D-glyceraldehyde 3-phosphate.

The protein belongs to the glyceraldehyde-3-phosphate dehydrogenase family. As to quaternary structure, homotetramer.

Its subcellular location is the cytoplasm. The enzyme catalyses D-glyceraldehyde 3-phosphate + phosphate + NAD(+) = (2R)-3-phospho-glyceroyl phosphate + NADH + H(+). It functions in the pathway carbohydrate degradation; glycolysis; pyruvate from D-glyceraldehyde 3-phosphate: step 1/5. Functionally, may play an important role in regulating the switch between different pathways for energy production during spermiogenesis and in the spermatozoon. Required for sperm motility and male fertility. The chain is Glyceraldehyde-3-phosphate dehydrogenase, testis-specific from Mesocricetus auratus (Golden hamster).